The primary structure comprises 151 residues: Superoxide dismutase [Cu-Zn] 2 (151 aa).

Residues H44, H46, and H61 each contribute to the Cu cation site. C55 and C144 form a disulfide bridge. The Zn(2+) site is built by H61, H69, H78, and D81. H118 provides a ligand contact to Cu cation.

This sequence belongs to the Cu-Zn superoxide dismutase family. In terms of assembly, homodimer. Requires Cu cation as cofactor. Zn(2+) is required as a cofactor.

It is found in the cytoplasm. It catalyses the reaction 2 superoxide + 2 H(+) = H2O2 + O2. In terms of biological role, destroys radicals which are normally produced within the cells and which are toxic to biological systems. This Zea mays (Maize) protein is Superoxide dismutase [Cu-Zn] 2 (SODCC.1).